Consider the following 280-residue polypeptide: MQAKYSSTRDMLDDDGDTTMSLHSQGSATTRHPEPRRTEHRAPSSTWRPVALTLLTLCLVLLIGLAALGLLFFQYYQLSNTGQDTISQMEERLGNTSQELQSLQVQNIKLAGSLQHVAEKLCRELYNKAGAHRCSPCTEQWKWHGDNCYQFYKDSKSWEDCKYFCLSENSTMLKINKQEDLEFAASQSYSEFFYSYWTGLLRPDSGKAWLWMDGTPFTSELFHIIIDVTSPRSRDCVAILNGMIFSKDCKELKRCVCERRAGMVKPESLHVPPETLGEGD.

The tract at residues 1-44 (MQAKYSSTRDMLDDDGDTTMSLHSQGSATTRHPEPRRTEHRAPS) is disordered. At 1–52 (MQAKYSSTRDMLDDDGDTTMSLHSQGSATTRHPEPRRTEHRAPSSTWRPVAL) the chain is on the cytoplasmic side. Polar residues predominate over residues 18–30 (TTMSLHSQGSATT). Basic and acidic residues predominate over residues 31–42 (RHPEPRRTEHRA). The helical; Signal-anchor for type II membrane protein transmembrane segment at 53–73 (TLLTLCLVLLIGLAALGLLFF) threads the bilayer. Residues 74-280 (QYYQLSNTGQ…VPPETLGEGD (207 aa)) lie on the Extracellular side of the membrane. Residues Asn-95 and Asn-169 are each glycosylated (N-linked (GlcNAc...) asparagine). The C-type lectin domain occupies 144–258 (HGDNCYQFYK…CKELKRCVCE (115 aa)). Disulfide bonds link Cys-165/Cys-257 and Cys-236/Cys-249.

In terms of tissue distribution, expressed preferentially in dendritic cells.

The protein localises to the membrane. In Homo sapiens (Human), this protein is C-type lectin domain family 1 member A (CLEC1A).